The sequence spans 120 residues: U13-lycotoxin-Ls1e (120 aa).

The N-terminal stretch at 1-16 is a signal peptide; that stretch reads MKILFVLISILYAVYC. Residues 17-54 constitute a propeptide that is removed on maturation; that stretch reads FSSEEDVDSAYLANELEPVEDINSEQYAALEPKEEQER. Disulfide bonds link C56–C70, C63–C76, C69–C87, and C78–C85. Positions 56–95 constitute an Agouti domain; the sequence is CAGMGRDCKDDCDCCLNIATCNCWFGRYFCSCTFGDYQTC.

It belongs to the neurotoxin 05 (agouti) family. In terms of processing, contains 6 disulfide bonds. In terms of tissue distribution, expressed by the venom gland.

It localises to the secreted. This Lycosa singoriensis (Wolf spider) protein is U13-lycotoxin-Ls1e.